The following is a 166-amino-acid chain: Ribosome maturation factor RimM (166 aa).

The region spanning E94–L165 is the PRC barrel domain.

The protein belongs to the RimM family. In terms of assembly, binds ribosomal protein uS19.

It is found in the cytoplasm. Its function is as follows. An accessory protein needed during the final step in the assembly of 30S ribosomal subunit, possibly for assembly of the head region. Essential for efficient processing of 16S rRNA. May be needed both before and after RbfA during the maturation of 16S rRNA. It has affinity for free ribosomal 30S subunits but not for 70S ribosomes. This is Ribosome maturation factor RimM from Borreliella afzelii (strain PKo) (Borrelia afzelii).